A 212-amino-acid chain; its full sequence is SOSS complex subunit B1 (212 aa).

The OB DNA-binding region spans 22–92 (IVLETGRVTK…TLYTGRGGDL (71 aa)). Positions 110-212 (EPNPEYNTQQ…GKETRRSSKR (103 aa)) are disordered. Positions 114–130 (EYNTQQAPNKSVQNNDN) are enriched in polar residues. Thr117 carries the post-translational modification Phosphothreonine; by ATM. Low complexity predominate over residues 131-148 (SPTAPQATTGPPAASPAS). Polar residues predominate over residues 149–160 (ENQNGNGLSTQL). Positions 166–178 (PHPSHTPSHPPST) are enriched in low complexity.

It belongs to the SOSS-B family. SOSS-B1 subfamily. Component of the SOSS complex, composed of SOSS-B (SOSS-B1/NABP2 or SOSS-B2/NABP1), SOSS-A/INTS3 and SOSS-C/INIP. SOSS complexes containing SOSS-B1/NABP2 are more abundant than complexes containing SOSS-B2/NABP1. Directly interacts with ATM, SOSS-A/INTS3 and RAD51. Interacts with INTS7. Post-translationally, phosphorylated by ATM in response to DNA damage. Phosphorylation prevents degradation by the proteasome, hence stabilization of the protein and accumulation within cells. In terms of processing, ubiquitinated in a FBXL5-dependent manner, leading to proteasomal degradation.

It localises to the nucleus. Functionally, component of the SOSS complex, a multiprotein complex that functions downstream of the MRN complex to promote DNA repair and G2/M checkpoint. In the SOSS complex, acts as a sensor of single-stranded DNA that binds to single-stranded DNA, in particular to polypyrimidines. The SOSS complex associates with DNA lesions and influences diverse endpoints in the cellular DNA damage response including cell-cycle checkpoint activation, recombinational repair and maintenance of genomic stability. Required for efficient homologous recombination-dependent repair of double-strand breaks (DSBs) and ATM-dependent signaling pathways. This chain is SOSS complex subunit B1 (Nabp2), found in Mus musculus (Mouse).